The sequence spans 62 residues: Disintegrin schistatin-like subunit A (62 aa).

A Disintegrin domain is found at 1 to 62 (SVNPCCDPVI…TTDCPRNRYN (62 aa)). Intrachain disulfides connect Cys-5/Cys-28, Cys-19/Cys-25, Cys-24/Cys-49, and Cys-37/Cys-56. The Cell attachment site motif lies at 41 to 43 (RGD).

This sequence belongs to the disintegrin family. Dimeric disintegrin subfamily. Heterodimer with subunit B; disulfide-linked. In terms of tissue distribution, expressed by the venom gland.

Its subcellular location is the secreted. Its function is as follows. May bind to both alpha-IIb/beta-3 (ITGA2B/ITGB3) and alpha-V/beta-3 (ITGAV/ITGB3) integrins, and may inhibit platelet aggregation. In Echis carinatus (Saw-scaled viper), this protein is Disintegrin schistatin-like subunit A.